The sequence spans 333 residues: PRKC apoptosis WT1 regulator protein (333 aa).

Composition is skewed to low complexity over residues 1–14 (MATG…STTT), 33–51 (PAGP…PAGS), 66–80 (GPAG…APGA), and 105–116 (PSAAAASGAPGS). The segment at 1-262 (MATGGYRSGG…ASFSSSSTLE (262 aa)) is disordered. The B30.2/SPRY domain-binding motif motif lies at 62 to 66 (ELNHG). The short motif at 138–154 (RKGKGQIEKRKLREKRR) is the Nuclear localization signal element. The selective for apoptosis induction in cancer cells (SAC) stretch occupies residues 138-196 (RKGKGQIEKRKLREKRRSTGVVNIPAAECLDEYEDDEAGQKERKREDAITQQNTIQNEA). Position 156 is a phosphothreonine; by PKA (Thr156). Positions 175-185 (AGQKERKREDA) are enriched in basic and acidic residues. Residues 186 to 196 (ITQQNTIQNEA) are compositionally biased toward polar residues. Phosphoserine is present on Ser224. Residues 235–248 (PRTDRSGFSRHNRD) show a composition bias toward basic and acidic residues. Residues 255-333 (FSSSSTLEKR…LLKVVGQLTR (79 aa)) are a coiled coil. The segment at 293-333 (IGKLKEEIDLLNRDLDDMEDENEQLKQENKTLLKVVGQLTR) is leucine-zipper.

As to quaternary structure, homooligomer. Interacts (via the C-terminal region) with WT1. Interacts with THAP1. Interacts with AATF. Interacts with BACE1. Interacts with SPSB1 (via B30.2/SPRY domain); this interaction is direct and occurs in association with the Elongin BC complex. Interacts with SPSB2 (via B30.2/SPRY domain); this interaction occurs in association with the Elongin BC complex. Interacts with SPSB4 (via B30.2/SPRY domain); this interaction occurs in association with the Elongin BC complex. Component of a ternary complex composed of SQSTM1 and PRKCZ. Interacts with actin. Post-translationally, preferentially phosphorylated at the Thr-156 by PKC in cancer cells.

It is found in the cytoplasm. The protein localises to the nucleus. In terms of biological role, pro-apoptotic protein capable of selectively inducing apoptosis in cancer cells, sensitizing the cells to diverse apoptotic stimuli and causing regression of tumors in animal models. Induces apoptosis in certain cancer cells by activation of the Fas prodeath pathway and coparallel inhibition of NF-kappa-B transcriptional activity. Inhibits the transcriptional activation and augments the transcriptional repression mediated by WT1. Down-regulates the anti-apoptotic protein BCL2 via its interaction with WT1. Also seems to be a transcriptional repressor by itself. May be directly involved in regulating the amyloid precursor protein (APP) cleavage activity of BACE1. The sequence is that of PRKC apoptosis WT1 regulator protein (Pawr) from Mus musculus (Mouse).